Reading from the N-terminus, the 151-residue chain is Potassium/proton antiporter CemA (151 aa).

2 helical membrane-spanning segments follow: residues L7–F27 and I107–G127.

The protein belongs to the CemA family.

The protein localises to the plastid. It localises to the chloroplast inner membrane. The enzyme catalyses K(+)(in) + H(+)(out) = K(+)(out) + H(+)(in). Functionally, contributes to K(+)/H(+) antiport activity by supporting proton efflux to control proton extrusion and homeostasis in chloroplasts in a light-dependent manner to modulate photosynthesis. Prevents excessive induction of non-photochemical quenching (NPQ) under continuous-light conditions. Indirectly promotes efficient inorganic carbon uptake into chloroplasts. The polypeptide is Potassium/proton antiporter CemA (Aegilops crassa (Persian goatgrass)).